A 430-amino-acid polypeptide reads, in one-letter code: Protein translocase subunit SecY (430 aa).

10 consecutive transmembrane segments (helical) span residues 18-38, 68-88, 117-137, 147-167, 179-199, 217-237, 269-289, 308-328, 368-388, and 389-409; these read IFFT…PAPG, FSIF…MQLL, LAIS…NNYL, IMSY…LIWL, GISI…LIQF, VLGL…VLEA, GVIP…LTLF, NVGM…YAFV, FVGS…TKFM, and GLPQ…GVAI.

The protein belongs to the SecY/SEC61-alpha family. Component of the Sec protein translocase complex. Heterotrimer consisting of SecY, SecE and SecG subunits. The heterotrimers can form oligomers, although 1 heterotrimer is thought to be able to translocate proteins. Interacts with the ribosome. Interacts with SecDF, and other proteins may be involved. Interacts with SecA.

It localises to the cell membrane. Functionally, the central subunit of the protein translocation channel SecYEG. Consists of two halves formed by TMs 1-5 and 6-10. These two domains form a lateral gate at the front which open onto the bilayer between TMs 2 and 7, and are clamped together by SecE at the back. The channel is closed by both a pore ring composed of hydrophobic SecY resides and a short helix (helix 2A) on the extracellular side of the membrane which forms a plug. The plug probably moves laterally to allow the channel to open. The ring and the pore may move independently. In Staphylococcus aureus (strain NCTC 8325 / PS 47), this protein is Protein translocase subunit SecY.